A 309-amino-acid chain; its full sequence is 2-phospho-L-lactate transferase (309 aa).

Asp-50 and Lys-89 together coordinate 7,8-didemethyl-8-hydroxy-5-deazariboflavin.

This sequence belongs to the CofD family. In terms of assembly, homodimer. It depends on Mg(2+) as a cofactor.

It carries out the reaction (2S)-lactyl-2-diphospho-5'-guanosine + 7,8-didemethyl-8-hydroxy-5-deazariboflavin = oxidized coenzyme F420-0 + GMP + H(+). The protein operates within cofactor biosynthesis; coenzyme F420 biosynthesis. Functionally, catalyzes the transfer of the 2-phospholactate moiety from (2S)-lactyl-2-diphospho-5'-guanosine to 7,8-didemethyl-8-hydroxy-5-deazariboflavin (FO) with the formation of oxidized coenzyme F420-0 and GMP. The sequence is that of 2-phospho-L-lactate transferase from Methanococcus maripaludis (strain C6 / ATCC BAA-1332).